The chain runs to 299 residues: UBX domain-containing protein 1 (299 aa).

3 disordered regions span residues 39–61, 127–176, and 191–218; these read AGVP…SGAP, KAKL…NEDE, and EARK…APPK. The span at 46 to 61 shows a compositional bias: low complexity; the sequence is DAPAQAAPGAADSGAP. Residues 111–179 are a coiled coil; it reads AKVLEIREKI…REKNEDEIAR (69 aa). Basic and acidic residues predominate over residues 128-176; it reads AKLEAEENREKEKKRREDGKAMISHKEAARDREIREAAQDRRREKNEDE. Positions 201 to 213 are enriched in low complexity; sequence PVPEAKPAPSAAP. In terms of domain architecture, UBX spans 218–295; it reads KDYSTTTLQF…NLVPSANVIL (78 aa).

In terms of assembly, interacts with cdc-48.1 (via N-terminus) and cdc-48.2 (via N-terminus) in vitro; the interaction with cdc-48.1 is not detected in vivo. As to expression, expressed in the germline (at protein level). Expressed in spermatocytes but not in mature sperm (at protein level). Ubiquitously expressed. Predominantly expressed in the spermatheca.

It localises to the cytoplasm. It is found in the perinuclear region. In terms of biological role, ubiquitin-binding protein which acts as an adapter for ATPase cdc-48.1 and/or cdc-48.2, conferring substrate specificity. Together with ubxn-2 and ubxn-3, plays a role in hermaphrodite spermatogenesis probably by promoting the degradation of sex determination terminal factor tra-1. The sequence is that of UBX domain-containing protein 1 from Caenorhabditis elegans.